The primary structure comprises 353 residues: MDIFKELILKHTDENVLISPVSILSTLSILNHGAAGSTAEQLSKYIENMNENTPDDNNDMDVDIPYCATLATANKIYGSDSIEFHASFLQKIKDDFQTVNFNNANQTKELINEWVKTMTNGKINSLLTSPLSINTRMTVVSAVHFKAMWKYPFSKHLTYTDKFYISKNIVTSVDMMVSTENNLQYVHINELFGGFSIIDIPYEGNSSMVIILPDDIEGIYNIEKNITDEKFKKWCGMLSTKSIDLYMPKFKVEMTEPYNLVPILENLGLTNIFGYYADFSKMCNETITVEKFLHTTFIDVNEEYTEASAVTGVFMTNFSMVYRTKVYINHPFMYMIKDNTGRILFIGKYCYPQ.

The protein belongs to the serpin family. Poxviruses subfamily.

It localises to the host cytoplasm. Functionally, plays a role in mediating viral host range. May act to inhibit a caspase independent form of apoptosis to allow efficient virus replication in infected cells. The polypeptide is Serine proteinase inhibitor 1 (OPG208) (Vaccinia virus (strain Western Reserve) (VACV)).